A 366-amino-acid polypeptide reads, in one-letter code: Glutathione S-transferase omega-like 3 (366 aa).

Residue Cys-46 is part of the active site. In terms of domain architecture, GST C-terminal spans 197–349 (PRSLEAQITE…LGYTRSQPRV (153 aa)).

This sequence belongs to the GST superfamily. Omega family.

The protein localises to the cytoplasm. The enzyme catalyses RX + glutathione = an S-substituted glutathione + a halide anion + H(+). In terms of biological role, active as '1-Cys' thiol transferase against beta-hydroxyethyl disulfide (HED), as dehydroascorbate reductase and as dimethylarsinic acid reductase, while not active against the standard GST substrate 1-chloro-2,4-dinitrobenzene (CDNB). The polypeptide is Glutathione S-transferase omega-like 3 (GTO3) (Saccharomyces cerevisiae (strain ATCC 204508 / S288c) (Baker's yeast)).